A 279-amino-acid polypeptide reads, in one-letter code: Eukaryotic translation initiation factor 3 subunit G (279 aa).

2 disordered regions span residues 69–90 (AKYG…QLGE) and 149–193 (LNGG…EARD). Ser77 carries the phosphoserine modification. Residues 196–275 (TTLKVSQLNT…LILHLEWSKK (80 aa)) form the RRM domain.

It belongs to the eIF-3 subunit G family. In terms of assembly, component of the eukaryotic translation initiation factor 3 (eIF-3) complex.

The protein localises to the cytoplasm. Its function is as follows. RNA-binding component of the eukaryotic translation initiation factor 3 (eIF-3) complex, which is involved in protein synthesis of a specialized repertoire of mRNAs and, together with other initiation factors, stimulates binding of mRNA and methionyl-tRNAi to the 40S ribosome. The eIF-3 complex specifically targets and initiates translation of a subset of mRNAs involved in cell proliferation. This subunit can bind 18S rRNA. The chain is Eukaryotic translation initiation factor 3 subunit G from Lodderomyces elongisporus (strain ATCC 11503 / CBS 2605 / JCM 1781 / NBRC 1676 / NRRL YB-4239) (Yeast).